A 60-amino-acid chain; its full sequence is Large ribosomal subunit protein bL32 (60 aa).

Basic residues predominate over residues 1–16 (MAVPRRKTSPSRRGMR). The tract at residues 1-60 (MAVPRRKTSPSRRGMRRSADAIKKPTYVEDKDSGELRRPHHLDLKTGMYKGRQVLKKKDA) is disordered. Residues 17-44 (RSADAIKKPTYVEDKDSGELRRPHHLDL) show a composition bias toward basic and acidic residues.

Belongs to the bacterial ribosomal protein bL32 family.

The chain is Large ribosomal subunit protein bL32 from Bradyrhizobium sp. (strain BTAi1 / ATCC BAA-1182).